A 460-amino-acid polypeptide reads, in one-letter code: MEKKLGLSALTALVLSSMLGAGVFSLPQNMAAVASPAALLIGWGITGAGILLLAFAMLILTRIRPELDGGIFTYAREGFGELIGFCSAWGYWLCAVIANVSYLVIVFSALSFFTDTPELRLFGDGNTWQSIVGASALLWIVHFLILRGVQTAASINLVATLAKLLPLGLFVVLAMMMFKLDTFKLDFTGLALGVPVWEQVKNTMLITLWVFIGVEGAVVVSARARNKRDVGKATLLAVLSALGVYLLVTLLSLGVVARPELAEIRNPSMAGLMVEMMGPWGEIIIAAGLIVSVCGAYLSWTIMAAEVPFLAATHKAFPRIFARQNAQAAPSASLWLTNICVQICLVLIWLTGSDYNTLLTIASEMILVPYFLVGAFLLKIATRPLHKAVGVGACIYGLWLLYASGPMHLLLSVVLYAPGLLVFLYARKTHTHDNVLNRQEMVLIGMLLIASVPATWMLVG.

Residues 1-4 (MEKK) lie on the Cytoplasmic side of the membrane. A helical transmembrane segment spans residues 5-25 (LGLSALTALVLSSMLGAGVFS). Topologically, residues 26–38 (LPQNMAAVASPAA) are periplasmic. The helical transmembrane segment at 39 to 59 (LLIGWGITGAGILLLAFAMLI) threads the bilayer. At 60-92 (LTRIRPELDGGIFTYAREGFGELIGFCSAWGYW) the chain is on the cytoplasmic side. A helical transmembrane segment spans residues 93-113 (LCAVIANVSYLVIVFSALSFF). At 114–125 (TDTPELRLFGDG) the chain is on the periplasmic side. The helical transmembrane segment at 126–146 (NTWQSIVGASALLWIVHFLIL) threads the bilayer. Over 147 to 157 (RGVQTAASINL) the chain is Cytoplasmic. The helical transmembrane segment at 158-178 (VATLAKLLPLGLFVVLAMMMF) threads the bilayer. At 179-201 (KLDTFKLDFTGLALGVPVWEQVK) the chain is on the periplasmic side. Residues 202–222 (NTMLITLWVFIGVEGAVVVSA) form a helical membrane-spanning segment. At 223–235 (RARNKRDVGKATL) the chain is on the cytoplasmic side. A helical membrane pass occupies residues 236–256 (LAVLSALGVYLLVTLLSLGVV). Over 257-282 (ARPELAEIRNPSMAGLMVEMMGPWGE) the chain is Periplasmic. Residues 283 to 303 (IIIAAGLIVSVCGAYLSWTIM) form a helical membrane-spanning segment. The Cytoplasmic portion of the chain corresponds to 304 to 331 (AAEVPFLAATHKAFPRIFARQNAQAAPS). Residues 332 to 352 (ASLWLTNICVQICLVLIWLTG) form a helical membrane-spanning segment. Residues 353–357 (SDYNT) are Periplasmic-facing. A helical transmembrane segment spans residues 358-378 (LLTIASEMILVPYFLVGAFLL). The Cytoplasmic portion of the chain corresponds to 379-384 (KIATRP). 2 helical membrane passes run 385-405 (LHKA…YASG) and 406-426 (PMHL…FLYA). Over 427-439 (RKTHTHDNVLNRQ) the chain is Cytoplasmic. A helical transmembrane segment spans residues 440-460 (EMVLIGMLLIASVPATWMLVG).

It belongs to the amino acid-polyamine-organocation (APC) superfamily. Basic amino acid/polyamine antiporter (APA) (TC 2.A.3.2) family.

The protein localises to the cell inner membrane. The catalysed reaction is L-ornithine(in) + L-arginine(out) = L-ornithine(out) + L-arginine(in). Functionally, catalyzes electroneutral exchange between arginine and ornithine to allow high-efficiency energy conversion in the arginine deiminase pathway. This chain is Putative arginine/ornithine antiporter (ydgI), found in Escherichia coli O6:H1 (strain CFT073 / ATCC 700928 / UPEC).